The following is a 104-amino-acid chain: UPF0473 protein LGAS_0424 (104 aa).

It belongs to the UPF0473 family.

This is UPF0473 protein LGAS_0424 from Lactobacillus gasseri (strain ATCC 33323 / DSM 20243 / BCRC 14619 / CIP 102991 / JCM 1131 / KCTC 3163 / NCIMB 11718 / NCTC 13722 / AM63).